The sequence spans 118 residues: Protein TusC (118 aa).

This sequence belongs to the DsrF/TusC family. As to quaternary structure, heterohexamer, formed by a dimer of trimers. The hexameric TusBCD complex contains 2 copies each of TusB, TusC and TusD. The TusBCD complex interacts with TusE.

The protein localises to the cytoplasm. In terms of biological role, part of a sulfur-relay system required for 2-thiolation of 5-methylaminomethyl-2-thiouridine (mnm(5)s(2)U) at tRNA wobble positions. This is Protein TusC from Salmonella typhimurium (strain LT2 / SGSC1412 / ATCC 700720).